The primary structure comprises 147 residues: Hemoglobin subunit gamma (147 aa).

The Globin domain occupies 3-147 (NFTAEDKAAI…VASALGSRYH (145 aa)). Positions 64 and 93 each coordinate heme b.

It belongs to the globin family. As to quaternary structure, heterotetramer of two alpha chains and two gamma chains in fetal hemoglobin (Hb F). Red blood cells.

Gamma chains make up the fetal hemoglobin F, in combination with alpha chains. This chain is Hemoglobin subunit gamma (HBG), found in Aotus azarae (Azara's night monkey).